The primary structure comprises 37 residues: NAD-reducing hydrogenase HoxS subunit alpha (37 aa).

Belongs to the complex I 51 kDa subunit family. As to quaternary structure, tetramer of an alpha and a gamma subunits (flavin-containing dimer), and a delta and a nickel-containing beta subunits (hydrogenase dimer). Requires FMN as cofactor. [4Fe-4S] cluster serves as cofactor.

It is found in the cytoplasm. It catalyses the reaction H2 + NAD(+) = NADH + H(+). Its function is as follows. Subunits alpha and gamma of HoxS constitute an NADH--oxidoreductase. This chain is NAD-reducing hydrogenase HoxS subunit alpha (hoxF), found in Rhodococcus opacus (Nocardia opaca).